Consider the following 111-residue polypeptide: SPbeta prophage-derived uncharacterized protein YopW (111 aa).

In Bacillus subtilis (strain 168), this protein is SPbeta prophage-derived uncharacterized protein YopW (yopW).